The sequence spans 303 residues: Cyclin-dependent kinase B1-1 (303 aa).

The Protein kinase domain occupies 4–295 (YEKLEKVGEG…AKAAMEHPYF (292 aa)). ATP contacts are provided by residues 10 to 18 (VGEGTYGKV) and Lys33. Phosphothreonine is present on Thr14. Position 15 is a phosphotyrosine (Tyr15). Asp136 serves as the catalytic Proton acceptor. A Phosphothreonine modification is found at Thr170.

It belongs to the protein kinase superfamily. CMGC Ser/Thr protein kinase family. CDC2/CDKX subfamily. In terms of tissue distribution, expressed in actively dividing cells: root and shoot apical meristems, and young leaves.

The enzyme catalyses L-seryl-[protein] + ATP = O-phospho-L-seryl-[protein] + ADP + H(+). It carries out the reaction L-threonyl-[protein] + ATP = O-phospho-L-threonyl-[protein] + ADP + H(+). The catalysed reaction is [DNA-directed RNA polymerase] + ATP = phospho-[DNA-directed RNA polymerase] + ADP + H(+). This Oryza sativa subsp. japonica (Rice) protein is Cyclin-dependent kinase B1-1 (CDKB1-1).